The chain runs to 53 residues: MLRYALIFFIIAIIAAVLGFGGIAAGAAEIAKILFYIFVVIFLVTLVLGVARR.

A run of 2 helical transmembrane segments spans residues 5–25 and 30–50; these read ALIF…GIAA and IAKI…VLGV.

It belongs to the UPF0391 family.

The protein resides in the cell membrane. The polypeptide is UPF0391 membrane protein BURPS1106A_A2993 (Burkholderia pseudomallei (strain 1106a)).